A 375-amino-acid chain; its full sequence is Acetylornithine aminotransferase (375 aa).

Pyridoxal 5'-phosphate contacts are provided by residues 102–103 (GA) and F129. Position 132 (R132) interacts with N(2)-acetyl-L-ornithine. 214–217 (DEVQ) serves as a coordination point for pyridoxal 5'-phosphate. An N6-(pyridoxal phosphate)lysine modification is found at K243. S271 lines the N(2)-acetyl-L-ornithine pocket. Position 272 (T272) interacts with pyridoxal 5'-phosphate.

It belongs to the class-III pyridoxal-phosphate-dependent aminotransferase family. ArgD subfamily. In terms of assembly, homodimer. The cofactor is pyridoxal 5'-phosphate.

Its subcellular location is the cytoplasm. It catalyses the reaction N(2)-acetyl-L-ornithine + 2-oxoglutarate = N-acetyl-L-glutamate 5-semialdehyde + L-glutamate. It participates in amino-acid biosynthesis; L-arginine biosynthesis; N(2)-acetyl-L-ornithine from L-glutamate: step 4/4. This Archaeoglobus fulgidus (strain ATCC 49558 / DSM 4304 / JCM 9628 / NBRC 100126 / VC-16) protein is Acetylornithine aminotransferase.